We begin with the raw amino-acid sequence, 158 residues long: U4/U6.U5 small nuclear ribonucleoprotein 27 kDa protein (158 aa).

A compositionally biased stretch (basic residues) spans 1–30 (MGRSRSRTPPRRERRRSRSSSRDRERRRRE). The tract at residues 1 to 100 (MGRSRSRTPP…ISAEDMQGKT (100 aa)) is disordered. Positions 31–41 (RERSRSRDRDR) are enriched in basic and acidic residues. Positions 42-62 (RRSRSRSPHRRRSRSPRRHRS) are enriched in basic residues. Residues 69-86 (RQKDRRDDDRKDVKEKPA) are compositionally biased toward basic and acidic residues.

Belongs to the SNUT3 family. As to quaternary structure, part of a tri-snRNP complex.

The protein localises to the nucleus. Its function is as follows. May play a role in mRNA splicing. The chain is U4/U6.U5 small nuclear ribonucleoprotein 27 kDa protein (snrnp27) from Danio rerio (Zebrafish).